We begin with the raw amino-acid sequence, 383 residues long: Mannan endo-1,4-beta-mannosidase A (383 aa).

The first 18 residues, 1–18, serve as a signal peptide directing secretion; it reads MKFSQALLSLASLALAAA. Asparagine 75 carries an N-linked (GlcNAc...) asparagine glycan. A substrate-binding site is contributed by tryptophan 97. N-linked (GlcNAc...) asparagine glycosylation is present at asparagine 199. Residues asparagine 210 and 211–213 contribute to the substrate site; that span reads EPR. Glutamate 211 serves as the catalytic Proton donor/acceptor. Cysteine 214 and cysteine 217 are joined by a disulfide. Substrate contacts are provided by tyrosine 279 and tryptophan 283. A disulfide bridge links cysteine 301 with cysteine 308. Residue glutamate 312 is the Nucleophile of the active site. Cysteine 320 and cysteine 369 are oxidised to a cystine. Asparagine 332 carries an N-linked (GlcNAc...) asparagine glycan. Tryptophan 342 contacts substrate.

It belongs to the glycosyl hydrolase 5 (cellulase A) family. In terms of assembly, monomer.

The protein resides in the secreted. The enzyme catalyses Random hydrolysis of (1-&gt;4)-beta-D-mannosidic linkages in mannans, galactomannans and glucomannans.. Endo-1,4-mannanase that catalyzes the random hydrolysis of (1-&gt;4)-beta-D-mannosidic linkages in mannans and heteromannans. It is a crucial enzyme for depolymerization of seed galactomannans and wood galactoglucomannans. Active against locust bean gum and gum guar. Also has transglycosylation activity. In Emericella nidulans (strain FGSC A4 / ATCC 38163 / CBS 112.46 / NRRL 194 / M139) (Aspergillus nidulans), this protein is Mannan endo-1,4-beta-mannosidase A (manA).